A 260-amino-acid chain; its full sequence is 5'-nucleotidase SurE (260 aa).

A divalent metal cation-binding residues include Asp19, Asp20, Ser51, and Asn104.

The protein belongs to the SurE nucleotidase family. Requires a divalent metal cation as cofactor.

It localises to the cytoplasm. The enzyme catalyses a ribonucleoside 5'-phosphate + H2O = a ribonucleoside + phosphate. In terms of biological role, nucleotidase that shows phosphatase activity on nucleoside 5'-monophosphates. This is 5'-nucleotidase SurE from Paramagnetospirillum magneticum (strain ATCC 700264 / AMB-1) (Magnetospirillum magneticum).